Reading from the N-terminus, the 109-residue chain is Tyrosine-protein phosphatase 6 (109 aa).

One can recognise a Tyrosine-protein phosphatase domain in the interval 1 to 109 (YNINVIVMVC…SEDETTPLCV (109 aa)). Asp-76 serves as a coordination point for substrate.

Belongs to the protein-tyrosine phosphatase family.

It carries out the reaction O-phospho-L-tyrosyl-[protein] + H2O = L-tyrosyl-[protein] + phosphate. In Styela plicata (Wrinkled sea squirt), this protein is Tyrosine-protein phosphatase 6 (STY-6).